Reading from the N-terminus, the 90-residue chain is UPF0298 protein SSU98_1559 (90 aa).

This sequence belongs to the UPF0298 family.

Its subcellular location is the cytoplasm. This is UPF0298 protein SSU98_1559 from Streptococcus suis (strain 98HAH33).